Consider the following 221-residue polypeptide: Ras-related protein Rab-27A (221 aa).

The residue at position 2 (serine 2) is an N-acetylserine. Phosphoserine is present on serine 2. Residue 16 to 24 (GDSGVGKTS) coordinates GTP. An Effector region motif is present at residues 38 to 46 (FITTVGIDF). Residues 74-78 (DTAGQ), 133-136 (NKSD), and 163-165 (SAA) contribute to the GTP site. Cysteines 123 and 188 form a disulfide. The disordered stretch occupies residues 202–221 (NGHTSADPLNEEKEKGSCGC). Residues 211–221 (NEEKEKGSCGC) are compositionally biased toward basic and acidic residues. Residues cysteine 219 and cysteine 221 are each lipidated (S-geranylgeranyl cysteine). Cysteine methyl ester is present on cysteine 221.

The protein belongs to the small GTPase superfamily. Rab family. As to quaternary structure, binds SYTL1, SLAC2B, MYRIP, SYTL3, SYTL4 and SYTL5. Interacts with RPH3A and RPH3A. Binds MLPH and SYTL2. Interacts with UNC13D. Does not interact with the BLOC-3 complex (heterodimer of HPS1 and HPS4). Interacts (GDP-bound form preferentially) with DENND10.

The protein localises to the membrane. Its subcellular location is the melanosome. It localises to the late endosome. The protein resides in the lysosome. The enzyme catalyses GTP + H2O = GDP + phosphate + H(+). With respect to regulation, regulated by guanine nucleotide exchange factors (GEFs) which promote the exchange of bound GDP for free GTP, GTPase activating proteins (GAPs) which increase the GTP hydrolysis activity, and GDP dissociation inhibitors which inhibit the dissociation of the nucleotide from the GTPase. Activated by GEFs such as DENND10. Functionally, small GTPase which cycles between active GTP-bound and inactive GDP-bound states. In its active state, binds to a variety of effector proteins to regulate homeostasis of late endocytic pathway, including endosomal positioning, maturation and secretion. Plays a role in cytotoxic granule exocytosis in lymphocytes. Required for both granule maturation and granule docking and priming at the immunologic synapse. In Sus scrofa (Pig), this protein is Ras-related protein Rab-27A (RAB27A).